Consider the following 412-residue polypeptide: uncharacterized protein (412 aa).

[4Fe-4S] cluster contacts are provided by cysteine 62, cysteine 68, cysteine 71, and cysteine 143. Residues glutamine 243, phenylalanine 270, glutamate 290, and aspartate 338 each contribute to the S-adenosyl-L-methionine site. Cysteine 364 serves as the catalytic Nucleophile.

Belongs to the class I-like SAM-binding methyltransferase superfamily. RNA M5U methyltransferase family.

This is an uncharacterized protein from Mesorhizobium japonicum (strain LMG 29417 / CECT 9101 / MAFF 303099) (Mesorhizobium loti (strain MAFF 303099)).